Reading from the N-terminus, the 173-residue chain is Signal peptidase complex catalytic subunit sec11 (173 aa).

Over 1–15 (MLGIADMQPRQLAAQ) the chain is Cytoplasmic. The helical; Signal-anchor for type II membrane protein transmembrane segment at 16–36 (ILNFALVLSTAFMMWKGLSVV) threads the bilayer. At 37–173 (SDSPSPIVVV…MGVMVVLQRE (137 aa)) the chain is on the lumenal side. Catalysis depends on charge relay system residues Ser50, His89, and Asp115. Residues 159-170 (VMLGLMGVMVVL) are C-terminal short (CTS) helix.

The protein belongs to the peptidase S26B family. In terms of assembly, component of the signal peptidase complex (SPC) composed of a catalytic subunit SEC11 and three accessory subunits SPC1, SPC2 and SPC3. The complex induces a local thinning of the ER membrane which is used to measure the length of the signal peptide (SP) h-region of protein substrates. This ensures the selectivity of the complex towards h-regions shorter than 18-20 amino acids. SPC associates with the translocon complex.

The protein localises to the endoplasmic reticulum membrane. It carries out the reaction Cleavage of hydrophobic, N-terminal signal or leader sequences from secreted and periplasmic proteins.. In terms of biological role, catalytic component of the signal peptidase complex (SPC) which catalyzes the cleavage of N-terminal signal sequences from nascent proteins as they are translocated into the lumen of the endoplasmic reticulum. Specifically cleaves N-terminal signal peptides that contain a hydrophobic alpha-helix (h-region) shorter than 18-20 amino acids. This chain is Signal peptidase complex catalytic subunit sec11 (sec11), found in Pyrenophora tritici-repentis (strain Pt-1C-BFP) (Wheat tan spot fungus).